Here is a 565-residue protein sequence, read N- to C-terminus: MKSPAPSRPQKMALIPACIFLCFAALSVQAEETPVTPQPPDILLGPLFNDVQNAKLFPDQKTFADAVPNSDPLMILADYRMQQNQSGFDLRHFVNVNFTLPKEGEKYVPPEGQSLREHIDGLWPVLTRSTENTEKWDSLLPLPEPYVVPGGRFREVYYWDSYFTMLGLAESGHWDKVADMVANFAHEIDTYGHIPNGNRSYYLSRSQPPFFAMMVELLAQHEGDAALKQYLPQMQKEYAYWMDGVENLQAGQQEKRVVKLQDGTLLNRYWDDRDTPRPESWVEDIATAKSNPNRPATEIYRDLRSAAASGWDFSSRWMDNPQQLNTLRTTSIVPVDLNSLMFKMEKILARASKAAGDNAMANQYETLANARQKGIEKYLWNDQQGWYADYDLKSHKVRNQLTAAALFPLYVNAAAKDRANKMATATKTHLLQPGGLNTTSVKSGQQWDAPNGWAPLQWVATEGLQNYGQKEVAMDISWHFLTNVQHTYDREKKLVEKYDVSTTGTGGGGGEYPLQDGFGWTNGVTLKMLDLICPKEQPCDNVPATRPTVKSATTQPSTKEAQPTP.

The first 30 residues, 1 to 30 (MKSPAPSRPQKMALIPACIFLCFAALSVQA), serve as a signal peptide directing secretion. Substrate is bound by residues arginine 152, 159-160 (WD), asparagine 196, 205-207 (RSQ), 277-279 (RPE), and glycine 310. Active-site proton donor/acceptor residues include aspartate 312 and glutamate 496. A substrate-binding site is contributed by glutamate 511. The segment at 538-565 (PCDNVPATRPTVKSATTQPSTKEAQPTP) is disordered. Residues 548 to 565 (TVKSATTQPSTKEAQPTP) are compositionally biased toward polar residues.

It belongs to the glycosyl hydrolase 37 family. As to quaternary structure, monomer.

Its subcellular location is the periplasm. The catalysed reaction is alpha,alpha-trehalose + H2O = alpha-D-glucose + beta-D-glucose. In terms of biological role, provides the cells with the ability to utilize trehalose at high osmolarity by splitting it into glucose molecules that can subsequently be taken up by the phosphotransferase-mediated uptake system. The chain is Periplasmic trehalase from Escherichia coli O139:H28 (strain E24377A / ETEC).